A 507-amino-acid chain; its full sequence is Probable allantoinase (507 aa).

Residues H105, H107, K195, H231, H294, and D368 each coordinate Zn(2+). Residue K195 is modified to N6-carboxylysine.

It belongs to the metallo-dependent hydrolases superfamily. Allantoinase family. As to quaternary structure, homotetramer. The cofactor is Zn(2+). Carboxylation allows a single lysine to coordinate two zinc ions.

It carries out the reaction (S)-allantoin + H2O = allantoate + H(+). It functions in the pathway nitrogen metabolism; (S)-allantoin degradation; allantoate from (S)-allantoin: step 1/1. Its function is as follows. Catalyzes the conversion of allantoin (5-ureidohydantoin) to allantoate by hydrolytic cleavage of the five-member hydantoin ring. Catalyzes the first step of the ureide allantoin degradation followed by the sequential activity of AAH, UGLYAH and UAH which allows a complete purine breakdown without the intermediate generation of urea. This chain is Probable allantoinase (ALN), found in Oryza sativa subsp. japonica (Rice).